Here is a 312-residue protein sequence, read N- to C-terminus: Protoheme IX farnesyltransferase (312 aa).

The next 8 membrane-spanning stretches (helical) occupy residues 12-32 (LALT…PAML), 41-61 (FGLI…ANTF), 93-113 (VFAW…CHSW), 114-134 (LAAG…TKWL), 141-161 (NVIW…AVIT), 168-188 (FHAG…IFFW), 240-260 (VPAA…WFII), and 290-310 (ILFV…AHAV).

Belongs to the UbiA prenyltransferase family. Protoheme IX farnesyltransferase subfamily.

The protein resides in the cell membrane. The catalysed reaction is heme b + (2E,6E)-farnesyl diphosphate + H2O = Fe(II)-heme o + diphosphate. It functions in the pathway porphyrin-containing compound metabolism; heme O biosynthesis; heme O from protoheme: step 1/1. Functionally, converts heme B (protoheme IX) to heme O by substitution of the vinyl group on carbon 2 of heme B porphyrin ring with a hydroxyethyl farnesyl side group. The polypeptide is Protoheme IX farnesyltransferase (Corynebacterium jeikeium (strain K411)).